Here is a 260-residue protein sequence, read N- to C-terminus: MADSSREENVYLAKLAEQAERYEEMIEFMEKVAKTADVEELTVEERNLLSVAYKNVIGARRASWRIISSIEQKEESRGNEDHVNTIKEYRSKIEADLSKICDGILSLLESNLIPSASTAESKVFHLKMKGDYHRYLAEFKTGTERKEAAENTLLAYKSAQDIALAELAPTHPIRLGLALNFSVFYYEILNSPDRACNLAKQAFDEAISELDTLGEESYKDSTLIMQLLRDNLTLWTSDNADDVGDDIKEASKPESGEGQQ.

Positions 238 to 260 are disordered; it reads DNADDVGDDIKEASKPESGEGQQ. Basic and acidic residues predominate over residues 245–260; that stretch reads DDIKEASKPESGEGQQ.

Belongs to the 14-3-3 family. In terms of assembly, homodimer.

In Solanum lycopersicum (Tomato), this protein is 14-3-3 protein 4 (TFT4).